Consider the following 155-residue polypeptide: 3-hydroxyacyl-[acyl-carrier-protein] dehydratase FabZ (155 aa).

His58 is an active-site residue.

It belongs to the thioester dehydratase family. FabZ subfamily.

The protein localises to the cytoplasm. The catalysed reaction is a (3R)-hydroxyacyl-[ACP] = a (2E)-enoyl-[ACP] + H2O. Involved in unsaturated fatty acids biosynthesis. Catalyzes the dehydration of short chain beta-hydroxyacyl-ACPs and long chain saturated and unsaturated beta-hydroxyacyl-ACPs. The sequence is that of 3-hydroxyacyl-[acyl-carrier-protein] dehydratase FabZ from Rhizobium johnstonii (strain DSM 114642 / LMG 32736 / 3841) (Rhizobium leguminosarum bv. viciae).